Here is a 104-residue protein sequence, read N- to C-terminus: Large ribosomal subunit protein uL24 (104 aa).

It belongs to the universal ribosomal protein uL24 family. In terms of assembly, part of the 50S ribosomal subunit.

In terms of biological role, one of two assembly initiator proteins, it binds directly to the 5'-end of the 23S rRNA, where it nucleates assembly of the 50S subunit. Its function is as follows. One of the proteins that surrounds the polypeptide exit tunnel on the outside of the subunit. The polypeptide is Large ribosomal subunit protein uL24 (Shewanella baltica (strain OS223)).